Reading from the N-terminus, the 506-residue chain is Apolipoprotein N-acyltransferase (506 aa).

A run of 7 helical transmembrane segments spans residues 10 to 30 (ANAK…AGWG), 33 to 53 (LALP…PLWW), 57 to 77 (VLAP…FYGS), 105 to 125 (IWLC…LLMA), 139 to 159 (WGVT…LWWI), 176 to 196 (LAGP…VTLS), and 205 to 225 (VGLA…SVRV). Residues 238-473 (IQGNIPTREK…FVIYAATIFR (236 aa)) enclose the CN hydrolase domain. E279 functions as the Proton acceptor in the catalytic mechanism. K336 is an active-site residue. The Nucleophile role is filled by C385. A helical transmembrane segment spans residues 483–500 (YGDWLLPLLLGMLSLSVL).

This sequence belongs to the CN hydrolase family. Apolipoprotein N-acyltransferase subfamily.

The protein localises to the cell inner membrane. The catalysed reaction is N-terminal S-1,2-diacyl-sn-glyceryl-L-cysteinyl-[lipoprotein] + a glycerophospholipid = N-acyl-S-1,2-diacyl-sn-glyceryl-L-cysteinyl-[lipoprotein] + a 2-acyl-sn-glycero-3-phospholipid + H(+). It participates in protein modification; lipoprotein biosynthesis (N-acyl transfer). Functionally, catalyzes the phospholipid dependent N-acylation of the N-terminal cysteine of apolipoprotein, the last step in lipoprotein maturation. This chain is Apolipoprotein N-acyltransferase, found in Thermosynechococcus vestitus (strain NIES-2133 / IAM M-273 / BP-1).